The sequence spans 274 residues: MAIHLYKTSTPSTRNGTVYSQVKSNPRKNLIYGQHHCGKGRNVRGIITTRHRGGGHKRLYRKISFIRNEKYIYGRIITIEYDPNRNAYICLIHYGDGDKRYILHPRGAIIGDTLVSGTEVPIIIGNALPLTDMPLGTAIHNIEITLGKGGQLVRAAGAVAKLIAKEGKLATLKLPSGEVRLISKNCSATVGQVGNVGVNKKSLGRAGSKRWLGKRPVVRGVVMNPIDHPHGGGEGRAPIGRKKPTTPWGYPALGRRSRKINKYSDNFIVRRRSK.

Residues 224-253 (NPIDHPHGGGEGRAPIGRKKPTTPWGYPAL) form a disordered region.

The protein belongs to the universal ribosomal protein uL2 family. Part of the 50S ribosomal subunit.

The protein localises to the plastid. This Epifagus virginiana (Beechdrops) protein is Large ribosomal subunit protein uL2cz/uL2cy (rpl2-A).